A 436-amino-acid chain; its full sequence is KICSTOR complex protein kaptin (436 aa).

Met-1 carries the N-acetylmethionine modification.

As to quaternary structure, part of the KICSTOR complex composed of KPTN, ITFG2, KICS2 and SZT2. SZT2 probably serves as a link between the other three proteins in the KICSTOR complex and mediates the direct interaction with the GATOR1 complex. May associate with F-actin filaments.

The protein localises to the lysosome membrane. It is found in the cell projection. The protein resides in the lamellipodium. It localises to the stereocilium. Its function is as follows. As part of the KICSTOR complex functions in the amino acid-sensing branch of the TORC1 signaling pathway. Recruits, in an amino acid-independent manner, the GATOR1 complex to the lysosomal membranes and allows its interaction with GATOR2 and the RAG GTPases. Functions upstream of the RAG GTPases and is required to negatively regulate mTORC1 signaling in absence of amino acids. In absence of the KICSTOR complex mTORC1 is constitutively localized to the lysosome and activated. The KICSTOR complex is also probably involved in the regulation of mTORC1 by glucose. The protein is KICSTOR complex protein kaptin of Homo sapiens (Human).